The primary structure comprises 987 residues: UvrABC system protein A (987 aa).

33 to 40 (GLSGSGKS) serves as a coordination point for ATP. The segment at 255–282 (CPVCDYSLPELEPRLFSFNAPVGACPSC) adopts a C4-type zinc-finger fold. ABC transporter domains are found at residues 312–589 (WDRR…PRSL) and 609–938 (PNPK…QFLA). Position 642 to 649 (642 to 649 (GVSGSGKS)) interacts with ATP. The C4-type zinc-finger motif lies at 741–767 (CEACQGDGMIKVEMHFLPDVYVPCDVC). A disordered region spans residues 948 to 987 (ETRPAAMANKPDARPPRKVKPEKVAKAAKSATKKTAKKAS). The span at 958-972 (PDARPPRKVKPEKVA) shows a compositional bias: basic and acidic residues. A compositionally biased stretch (basic residues) spans 978–987 (ATKKTAKKAS).

Belongs to the ABC transporter superfamily. UvrA family. Forms a heterotetramer with UvrB during the search for lesions.

The protein localises to the cytoplasm. The UvrABC repair system catalyzes the recognition and processing of DNA lesions. UvrA is an ATPase and a DNA-binding protein. A damage recognition complex composed of 2 UvrA and 2 UvrB subunits scans DNA for abnormalities. When the presence of a lesion has been verified by UvrB, the UvrA molecules dissociate. The sequence is that of UvrABC system protein A from Xanthomonas axonopodis pv. citri (strain 306).